The sequence spans 152 residues: uncharacterized protein (152 aa).

Residues 7-133 form the VOC domain; the sequence is PALSPHLVVD…FGHHWSLGQP (127 aa).

This is an uncharacterized protein from Mycobacterium bovis (strain ATCC BAA-935 / AF2122/97).